Reading from the N-terminus, the 147-residue chain is Large ribosomal subunit protein uL13 (147 aa).

Belongs to the universal ribosomal protein uL13 family. As to quaternary structure, part of the 50S ribosomal subunit.

Its function is as follows. This protein is one of the early assembly proteins of the 50S ribosomal subunit, although it is not seen to bind rRNA by itself. It is important during the early stages of 50S assembly. The polypeptide is Large ribosomal subunit protein uL13 (Leuconostoc citreum (strain KM20)).